Consider the following 722-residue polypeptide: Probable glycerol-3-phosphate dehydrogenase, mitochondrial (722 aa).

The transit peptide at Met-1–Val-43 directs the protein to the mitochondrion. Residue Asp-76 to Glu-104 coordinates FAD. 2 EF-hand domains span residues Glu-624 to Lys-659 and Ile-660 to Gly-695. Residues Asp-673, Asn-675, Asn-677, Glu-679, and Glu-684 each contribute to the Ca(2+) site.

Belongs to the FAD-dependent glycerol-3-phosphate dehydrogenase family. FAD serves as cofactor.

Its subcellular location is the mitochondrion. It catalyses the reaction a quinone + sn-glycerol 3-phosphate = dihydroxyacetone phosphate + a quinol. The protein operates within polyol metabolism; glycerol degradation via glycerol kinase pathway; glycerone phosphate from sn-glycerol 3-phosphate (anaerobic route): step 1/1. Its activity is regulated as follows. Calcium-binding enhances the activity of the enzyme. The protein is Probable glycerol-3-phosphate dehydrogenase, mitochondrial of Caenorhabditis elegans.